The following is a 353-amino-acid chain: MMTLKVCPSLLLLFLVHSVWTRTVRQVYNELDPEHWSHYTFECPQECFCPPSFPNALYCDNKGLKEIPAIPARIWYLYLQNNLIETISEKPFVNATHLRWINLNKNKITNNGIESGVLSKLKRLLYLFLEDNELEEVPAPLPVGLEQLRLARNKISRIPEGVFSNLENLTMLDLHQNNLLDSALQSDTFQGLNSLMQLNIAKNSLKKMPLSIPANTLQLFLDNNSIEVIPENYFSAIPKVTFLRLNYNKLSDEGIPPNGFNVSSILDLQLSHNQLTKIPPINAHLEHLHLDHNRIKSVNGTQICPVSIAVAEDYGLYGNIPRLRYLRLDGNEIQPPIPLDIMICFQLLQAVVI.

Residues 1–21 (MMTLKVCPSLLLLFLVHSVWT) form the signal peptide. Residues 34 to 72 (EHWSHYTFECPQECFCPPSFPNALYCDNKGLKEIPAIPA) enclose the LRRNT domain. Cystine bridges form between C43–C49 and C47–C59. 8 LRR repeats span residues 73–94 (RIWYLYLQNNLIETISEKPFVN), 97–118 (HLRWINLNKNKITNNGIESGVL), 123–143 (RLLYLFLEDNELEEVPAPLPV), 144–165 (GLEQLRLARNKISRIPEGVFSN), 168–188 (NLTMLDLHQNNLLDSALQSDT), 194–214 (SLMQLNIAKNSLKKMPLSIPA), 215–236 (NTLQLFLDNNSIEVIPENYFSA), and 239–259 (KVTFLRLNYNKLSDEGIPPNG). N94 carries N-linked (GlcNAc...) (keratan sulfate) asparagine glycosylation. A glycan (N-linked (GlcNAc...) asparagine) is linked at N168. N223 carries an N-linked (GlcNAc...) (keratan sulfate) asparagine glycan. N261 carries N-linked (GlcNAc...) (keratan sulfate) asparagine glycosylation. LRR repeat units lie at residues 264–283 (SILDLQLSHNQLTKIPPINA) and 284–305 (HLEHLHLDHNRIKSVNGTQICP). N-linked (GlcNAc...) asparagine glycosylation occurs at N299. Cysteines 304 and 344 form a disulfide.

The protein belongs to the small leucine-rich proteoglycan (SLRP) family. SLRP class II subfamily. In terms of tissue distribution, cornea.

It localises to the secreted. Its subcellular location is the extracellular space. It is found in the extracellular matrix. Plays an important role in generating and maintaining a transparent matrix within the corneal stroma. The chain is Keratocan (KERA) from Coturnix japonica (Japanese quail).